The chain runs to 156 residues: ATP synthase subunit b (156 aa).

The helical transmembrane segment at 11–31 (AIAFVIFVWFCMKYVWPPLMA) threads the bilayer.

Belongs to the ATPase B chain family. In terms of assembly, F-type ATPases have 2 components, F(1) - the catalytic core - and F(0) - the membrane proton channel. F(1) has five subunits: alpha(3), beta(3), gamma(1), delta(1), epsilon(1). F(0) has three main subunits: a(1), b(2) and c(10-14). The alpha and beta chains form an alternating ring which encloses part of the gamma chain. F(1) is attached to F(0) by a central stalk formed by the gamma and epsilon chains, while a peripheral stalk is formed by the delta and b chains.

It localises to the cell inner membrane. Functionally, f(1)F(0) ATP synthase produces ATP from ADP in the presence of a proton or sodium gradient. F-type ATPases consist of two structural domains, F(1) containing the extramembraneous catalytic core and F(0) containing the membrane proton channel, linked together by a central stalk and a peripheral stalk. During catalysis, ATP synthesis in the catalytic domain of F(1) is coupled via a rotary mechanism of the central stalk subunits to proton translocation. Its function is as follows. Component of the F(0) channel, it forms part of the peripheral stalk, linking F(1) to F(0). This Klebsiella pneumoniae (strain 342) protein is ATP synthase subunit b.